We begin with the raw amino-acid sequence, 317 residues long: Ribosomal protein L11 methyltransferase (317 aa).

4 residues coordinate S-adenosyl-L-methionine: T158, G179, D201, and N244.

It belongs to the methyltransferase superfamily. PrmA family.

The protein resides in the cytoplasm. The catalysed reaction is L-lysyl-[protein] + 3 S-adenosyl-L-methionine = N(6),N(6),N(6)-trimethyl-L-lysyl-[protein] + 3 S-adenosyl-L-homocysteine + 3 H(+). Functionally, methylates ribosomal protein L11. This chain is Ribosomal protein L11 methyltransferase, found in Streptococcus pyogenes serotype M49 (strain NZ131).